The sequence spans 243 residues: Voltage-gated monoatomic cation channel TMEM109 (243 aa).

Positions 1 to 33 (MAGAHSTPLWSRHLLKAVLMVLVALFLVHSASA) are cleaved as a signal peptide. Residues 34–83 (QSHREFASPGQQKKETSADILTQIGRSLKEMLDTWLGPETMHVISETLLQ) are Lumenal-facing. The helical transmembrane segment at 84-104 (VMWAISSAISVACFALSGIAA) threads the bilayer. Residues 105 to 135 (QLLSALGLDGEQLTQGLKLSPSQVQTLLLWG) lie on the Cytoplasmic side of the membrane. The chain crosses the membrane as a helical span at residues 136 to 156 (AAALVIYWLLSLLLGLVLALL). The Lumenal segment spans residues 157-185 (GRILGGLKLVLFVAGFVALVRSVPDPSTR). The chain crosses the membrane as a helical span at residues 186–205 (ALMLLALLTLFALLSRLTGS). The Cytoplasmic segment spans residues 206 to 243 (RSSGSHLEAKVRGLERQIEELRGRQRRAAKMPRSMEEE).

As to quaternary structure, homooligomer. Interacts with CRYAB; in the cellular response to DNA damage.

The protein localises to the nucleus outer membrane. The protein resides in the endoplasmic reticulum membrane. It localises to the sarcoplasmic reticulum membrane. It catalyses the reaction K(+)(in) = K(+)(out). It carries out the reaction Ca(2+)(in) = Ca(2+)(out). Its function is as follows. Functions as a voltage-gated monoatomic cation channel permeable to both potassium and calcium. Plays a role in the cellular response to DNA damage. In Mus musculus (Mouse), this protein is Voltage-gated monoatomic cation channel TMEM109.